We begin with the raw amino-acid sequence, 332 residues long: Ribosomal RNA small subunit methyltransferase C (332 aa).

This sequence belongs to the methyltransferase superfamily. RsmC family. Monomer.

Its subcellular location is the cytoplasm. It carries out the reaction guanosine(1207) in 16S rRNA + S-adenosyl-L-methionine = N(2)-methylguanosine(1207) in 16S rRNA + S-adenosyl-L-homocysteine + H(+). Specifically methylates the guanine in position 1207 of 16S rRNA in the 30S particle. This is Ribosomal RNA small subunit methyltransferase C from Pseudomonas aeruginosa (strain LESB58).